We begin with the raw amino-acid sequence, 284 residues long: 4-hydroxy-3-methylbut-2-enyl diphosphate reductase (284 aa).

C12 serves as a coordination point for [4Fe-4S] cluster. H40 and H72 together coordinate (2E)-4-hydroxy-3-methylbut-2-enyl diphosphate. Dimethylallyl diphosphate is bound by residues H40 and H72. Isopentenyl diphosphate is bound by residues H40 and H72. Residue C94 coordinates [4Fe-4S] cluster. H122 contributes to the (2E)-4-hydroxy-3-methylbut-2-enyl diphosphate binding site. H122 serves as a coordination point for dimethylallyl diphosphate. H122 contributes to the isopentenyl diphosphate binding site. E124 (proton donor) is an active-site residue. T161 is a (2E)-4-hydroxy-3-methylbut-2-enyl diphosphate binding site. C193 lines the [4Fe-4S] cluster pocket. (2E)-4-hydroxy-3-methylbut-2-enyl diphosphate contacts are provided by S221, N223, and S264. Residues S221, N223, and S264 each contribute to the dimethylallyl diphosphate site. The isopentenyl diphosphate site is built by S221, N223, and S264.

Belongs to the IspH family. [4Fe-4S] cluster is required as a cofactor.

It carries out the reaction isopentenyl diphosphate + 2 oxidized [2Fe-2S]-[ferredoxin] + H2O = (2E)-4-hydroxy-3-methylbut-2-enyl diphosphate + 2 reduced [2Fe-2S]-[ferredoxin] + 2 H(+). The catalysed reaction is dimethylallyl diphosphate + 2 oxidized [2Fe-2S]-[ferredoxin] + H2O = (2E)-4-hydroxy-3-methylbut-2-enyl diphosphate + 2 reduced [2Fe-2S]-[ferredoxin] + 2 H(+). It participates in isoprenoid biosynthesis; dimethylallyl diphosphate biosynthesis; dimethylallyl diphosphate from (2E)-4-hydroxy-3-methylbutenyl diphosphate: step 1/1. It functions in the pathway isoprenoid biosynthesis; isopentenyl diphosphate biosynthesis via DXP pathway; isopentenyl diphosphate from 1-deoxy-D-xylulose 5-phosphate: step 6/6. Catalyzes the conversion of 1-hydroxy-2-methyl-2-(E)-butenyl 4-diphosphate (HMBPP) into a mixture of isopentenyl diphosphate (IPP) and dimethylallyl diphosphate (DMAPP). Acts in the terminal step of the DOXP/MEP pathway for isoprenoid precursor biosynthesis. The chain is 4-hydroxy-3-methylbut-2-enyl diphosphate reductase from Dehalococcoides mccartyi (strain ATCC BAA-2100 / JCM 16839 / KCTC 5957 / BAV1).